The primary structure comprises 491 residues: Ketol-acid reductoisomerase (NADP(+)) (491 aa).

Residues 14-208 (LKHLGKCRFM…GSHRAGVLES (195 aa)) form the KARI N-terminal Rossmann domain. NADP(+) is bound by residues 45–48 (CGSQ), arginine 68, and serine 78. The active site involves histidine 132. Residue glycine 158 coordinates NADP(+). 2 KARI C-terminal knotted domains span residues 209–344 (SFVA…QAPN) and 345–485 (YQQE…MQNM). Mg(2+) is bound by residues aspartate 217, glutamate 221, glutamate 389, and glutamate 393. Serine 414 is a binding site for substrate.

This sequence belongs to the ketol-acid reductoisomerase family. The cofactor is Mg(2+).

The catalysed reaction is (2R)-2,3-dihydroxy-3-methylbutanoate + NADP(+) = (2S)-2-acetolactate + NADPH + H(+). It carries out the reaction (2R,3R)-2,3-dihydroxy-3-methylpentanoate + NADP(+) = (S)-2-ethyl-2-hydroxy-3-oxobutanoate + NADPH + H(+). Its pathway is amino-acid biosynthesis; L-isoleucine biosynthesis; L-isoleucine from 2-oxobutanoate: step 2/4. It participates in amino-acid biosynthesis; L-valine biosynthesis; L-valine from pyruvate: step 2/4. Functionally, involved in the biosynthesis of branched-chain amino acids (BCAA). Catalyzes an alkyl-migration followed by a ketol-acid reduction of (S)-2-acetolactate (S2AL) to yield (R)-2,3-dihydroxy-isovalerate. In the isomerase reaction, S2AL is rearranged via a Mg-dependent methyl migration to produce 3-hydroxy-3-methyl-2-ketobutyrate (HMKB). In the reductase reaction, this 2-ketoacid undergoes a metal-dependent reduction by NADPH to yield (R)-2,3-dihydroxy-isovalerate. This is Ketol-acid reductoisomerase (NADP(+)) from Blochmanniella pennsylvanica (strain BPEN).